Here is a 264-residue protein sequence, read N- to C-terminus: Apolipoprotein A-I (264 aa).

The first 18 residues, 1–18 (MKAVVLALAVLFLTGSQA), serve as a signal peptide directing secretion. 2 repeat units span residues 67–88 (LHLL…EQLG) and 89–110 (PVTH…QEMN). The 10 X approximate tandem repeats stretch occupies residues 67-264 (LHLLDNWDTL…DEASKKLNAQ (198 aa)). Methionine 109 carries the post-translational modification Methionine sulfoxide. The stretch at 111–121 (KDLEEVKVKVQ) is one 3; half-length repeat. Tandem repeats lie at residues 122 to 143 (PYLD…EKVG), 144 to 165 (PLGA…EKLT), 166 to 187 (PLGE…TQLA), 188 to 207 (PYSD…IRDS), and 208 to 229 (PSLA…EKAK). The 9; half-length repeat unit spans residues 230–240 (PALEDLRQGLM). Repeat 10 spans residues 241 to 264 (PVLENLKTTVLAAIDEASKKLNAQ).

It belongs to the apolipoprotein A1/A4/E family. In terms of assembly, homodimer. Interacts with APOA1BP and CLU. Component of a sperm activating protein complex (SPAP), consisting of APOA1, an immunoglobulin heavy chain, an immunoglobulin light chain and albumin. Interacts with NDRG1. Interacts with SCGB3A2. Interacts with NAXE and YJEFN3. Glycosylated. Post-translationally, palmitoylated. In terms of processing, phosphorylation sites are present in the extracellular medium.

The protein localises to the secreted. Participates in the reverse transport of cholesterol from tissues to the liver for excretion by promoting cholesterol efflux from tissues and by acting as a cofactor for the lecithin cholesterol acyltransferase (LCAT). As part of the SPAP complex, activates spermatozoa motility. This Jaculus jaculus (Lesser Egyptian jerboa) protein is Apolipoprotein A-I (APOA1).